The chain runs to 150 residues: Small ribosomal subunit protein uS13 (150 aa).

Positions 131-150 are disordered; the sequence is QRTKSTFRRGPTVGVSRRKK.

Belongs to the universal ribosomal protein uS13 family. In terms of assembly, part of the 30S ribosomal subunit. Forms a loose heterodimer with protein S19. Forms two bridges to the 50S subunit in the 70S ribosome.

Functionally, located at the top of the head of the 30S subunit, it contacts several helices of the 16S rRNA. In the 70S ribosome it contacts the 23S rRNA (bridge B1a) and protein L5 of the 50S subunit (bridge B1b), connecting the 2 subunits; these bridges are implicated in subunit movement. The sequence is that of Small ribosomal subunit protein uS13 from Methanocaldococcus jannaschii (strain ATCC 43067 / DSM 2661 / JAL-1 / JCM 10045 / NBRC 100440) (Methanococcus jannaschii).